Here is a 537-residue protein sequence, read N- to C-terminus: Interleukin-2 receptor subunit beta (537 aa).

A signal peptide spans 1–26 (MATVDLSWRLPLYILLLLLATTWVSA). At 27 to 239 (AVNDCSHLKC…FRTRPADPKE (213 aa)) the chain is on the extracellular side. Cysteine 36 and cysteine 46 are disulfide-bonded. 3 N-linked (GlcNAc...) asparagine glycosylation sites follow: asparagine 43, asparagine 55, and asparagine 71. An intrachain disulfide couples cysteine 74 to cysteine 86. Residues 135–235 (APHSLQVLHI…QPMAFRTRPA (101 aa)) enclose the Fibronectin type-III domain. N-linked (GlcNAc...) asparagine glycosylation occurs at asparagine 150. A WSXWS motif motif is present at residues 221-225 (WSPWS). A helical membrane pass occupies residues 240–267 (IFPLPWLRCLLLVLGCFFGFLSCVCVLV). Topologically, residues 268-537 (KCRYLGPWLK…LQAQDSAHLI (270 aa)) are cytoplasmic. The short motif at 280-288 (LKCHIPDPS) is the Box 1 motif element. Disordered stretches follow at residues 442–466 (AYGN…SLAS) and 479–498 (ELGD…QASV). Residues 487–497 (MSTNSSGQQAS) show a composition bias toward polar residues.

The protein belongs to the type I cytokine receptor family. Type 4 subfamily. Non-covalent dimer of an alpha and a beta subunit. IL2R exists in 3 different forms: a high affinity dimer, an intermediate affinity monomer (beta subunit), and a low affinity monomer (alpha subunit). The high and intermediate affinity forms also associate with a gamma subunit. Interacts with SHB upon interleukin stimulation.

The protein localises to the cell membrane. Its subcellular location is the cell surface. Receptor for interleukin-2. This beta subunit is involved in receptor mediated endocytosis and transduces the mitogenic signals of IL2. Probably in association with IL15RA, involved in the stimulation of neutrophil phagocytosis by IL15. The chain is Interleukin-2 receptor subunit beta (Il2rb) from Rattus norvegicus (Rat).